A 577-amino-acid chain; its full sequence is Phosphoenolpyruvate-protein phosphotransferase (577 aa).

Histidine 191 functions as the Tele-phosphohistidine intermediate in the catalytic mechanism. Residues arginine 298 and arginine 334 each contribute to the phosphoenolpyruvate site. Mg(2+) contacts are provided by glutamate 435 and aspartate 459. Phosphoenolpyruvate is bound by residues 458–459 (ND) and arginine 469. Catalysis depends on cysteine 506, which acts as the Proton donor.

It belongs to the PEP-utilizing enzyme family. As to quaternary structure, homodimer. Mg(2+) serves as cofactor.

It localises to the cytoplasm. It carries out the reaction L-histidyl-[protein] + phosphoenolpyruvate = N(pros)-phospho-L-histidyl-[protein] + pyruvate. In terms of biological role, general (non sugar-specific) component of the phosphoenolpyruvate-dependent sugar phosphotransferase system (sugar PTS). This major carbohydrate active-transport system catalyzes the phosphorylation of incoming sugar substrates concomitantly with their translocation across the cell membrane. Enzyme I transfers the phosphoryl group from phosphoenolpyruvate (PEP) to the phosphoryl carrier protein (HPr). In Streptococcus equinus (Streptococcus bovis), this protein is Phosphoenolpyruvate-protein phosphotransferase (ptsI).